We begin with the raw amino-acid sequence, 55 residues long: Large ribosomal subunit protein bL32 (55 aa).

Positions 1–19 are enriched in basic residues; sequence MAVPKRRMSRANTHSRRSQ. The tract at residues 1 to 20 is disordered; sequence MAVPKRRMSRANTHSRRSQW.

The protein belongs to the bacterial ribosomal protein bL32 family.

This chain is Large ribosomal subunit protein bL32, found in Corynebacterium jeikeium (strain K411).